Reading from the N-terminus, the 170-residue chain is Cysteine-rich uncharacterized protein 241L (170 aa).

The sequence is that of Cysteine-rich uncharacterized protein 241L from Acheta domesticus (House cricket).